Reading from the N-terminus, the 546-residue chain is Membrane protein insertase YidC (546 aa).

The helical transmembrane segment at 6-26 (NLLLIALLFVSFMIWQAWQVD) threads the bilayer. Residues 30–44 (QPTAQTTQQTTNTAT) show a composition bias toward low complexity. Residues 30 to 55 (QPTAQTTQQTTNTATGDKASQAVPGS) are disordered. 4 helical membrane-spanning segments follow: residues 344-364 (KFIHSFVGNWGFSIIVITFIV), 419-439 (LGGCLPLIIQMPIFLALYYML), 457-477 (LSAQDPYYILPILMGITMYFI), and 498-518 (PVIFTVFFLWFPAGLVLYYIV).

It belongs to the OXA1/ALB3/YidC family. Type 1 subfamily. Interacts with the Sec translocase complex via SecD. Specifically interacts with transmembrane segments of nascent integral membrane proteins during membrane integration.

Its subcellular location is the cell inner membrane. Its function is as follows. Required for the insertion and/or proper folding and/or complex formation of integral membrane proteins into the membrane. Involved in integration of membrane proteins that insert both dependently and independently of the Sec translocase complex, as well as at least some lipoproteins. Aids folding of multispanning membrane proteins. The polypeptide is Membrane protein insertase YidC (Yersinia pestis).